Consider the following 99-residue polypeptide: IPGGLSPRSVSDPDVQKAAAFAVQEYNAGSANAHYYKELRVVEAQSQSVAGEKYFLMMELVKTKCAKTAGKPKVYKEIQNCELPPIKQQEEKLCGFQVW.

Positions 3–99 (GGLSPRSVSD…EEKLCGFQVW (97 aa)) constitute a Cystatin domain. Residues 47–51 (QSVAG) carry the Secondary area of contact motif. A disulfide bond links cysteine 65 and cysteine 81.

This sequence belongs to the cystatin family. As to expression, expressed by the venom gland.

Its subcellular location is the secreted. Functionally, inhibits various C1 cysteine proteases including cathepsin L (Ki is 0.1 nM), papain (Ki is 0.19 nM), cathepsin S (Ki is 1.2 nM), and cathepsin B (Ki is 2.5 nM). This protein has no toxic activity and its function in the venom is unknown. It may play a role as housekeeping or regulatory protein. In Naja atra (Chinese cobra), this protein is Cystatin.